The following is a 315-amino-acid chain: Putative methyltransferase NSUN5C (315 aa).

S-adenosyl-L-methionine is bound by residues 50–56, aspartate 74, arginine 79, and aspartate 121; that span reads VPPQAIK. Cysteine 175 acts as the Nucleophile in catalysis. A disordered region spans residues 245–269; that stretch reads TSASQAKASAPERTPSPAPKRKKRA.

The protein belongs to the class I-like SAM-binding methyltransferase superfamily. RsmB/NOP family. In terms of tissue distribution, ubiquitous.

May have S-adenosyl-L-methionine-dependent methyl-transferase activity. In Homo sapiens (Human), this protein is Putative methyltransferase NSUN5C (NSUN5P2).